A 114-amino-acid chain; its full sequence is MIARIQFIKGIDEKVLPDVRLTRSRDGSTGTATFLFKNANLINKSLALNGEITGMYMIDEEGILETRDVSARFVNGKPQAVESIYIMKSPEAWDRFMRFMERYGESNGLAFTKA.

It belongs to the Psb28 family. In terms of assembly, part of the photosystem II complex.

Its subcellular location is the plastid. It is found in the chloroplast thylakoid membrane. This Thalassiosira pseudonana (Marine diatom) protein is Photosystem II reaction center Psb28 protein.